Reading from the N-terminus, the 335-residue chain is MIEFHDVHKTYRVAGREIPALQPTRLNIQAGQIFGLIGHSGAGKSTLLRLINRLEEPSGGRILVEGEDVTALDAEGLRRFRQRVGMIFQHFNLLSSKTVADNIAMPLRLAGGFSRAEVDARVSELLARVGLSDHARKYPAQLSGGQKQRVGIARALACRPSILLCDEATSALDPQTTASVLQLLAEINRELKLTIVLITHEMDVIRRVCDQVAVMDGGAIVEQGDVADVFLHPQHPTTRRFVFEAERVDEDERHDDFAHVPGLILRLTFRGEATYAPLLGTVARQTGVDYSILSGRIDRIKDTPYGQLTLALVGGDLEAAMSQLNAADVHVEVLR.

The ABC transporter domain occupies 2 to 242 (IEFHDVHKTY…PQHPTTRRFV (241 aa)). ATP is bound at residue 38 to 45 (GHSGAGKS).

This sequence belongs to the ABC transporter superfamily. Methionine importer (TC 3.A.1.24) family. In terms of assembly, the complex is composed of two ATP-binding proteins (MetN), two transmembrane proteins (MetI) and a solute-binding protein (MetQ).

It is found in the cell inner membrane. The enzyme catalyses L-methionine(out) + ATP + H2O = L-methionine(in) + ADP + phosphate + H(+). It catalyses the reaction D-methionine(out) + ATP + H2O = D-methionine(in) + ADP + phosphate + H(+). In terms of biological role, part of the ABC transporter complex MetNIQ involved in methionine import. Responsible for energy coupling to the transport system. The sequence is that of Methionine import ATP-binding protein MetN 2 from Pseudomonas aeruginosa (strain UCBPP-PA14).